Reading from the N-terminus, the 226-residue chain is ATP-dependent dethiobiotin synthetase BioD (226 aa).

14–19 (GIGKTF) lines the ATP pocket. Threonine 18 serves as a coordination point for Mg(2+). Lysine 39 is a catalytic residue. Serine 43 is a binding site for substrate. Residues aspartate 56, 117-120 (EGVG), 177-178 (NT), 206-208 (PHI), and asparagine 213 each bind ATP. Mg(2+)-binding residues include aspartate 56 and glutamate 117.

Belongs to the dethiobiotin synthetase family. As to quaternary structure, homodimer. Mg(2+) is required as a cofactor.

The protein localises to the cytoplasm. The enzyme catalyses (7R,8S)-7,8-diammoniononanoate + CO2 + ATP = (4R,5S)-dethiobiotin + ADP + phosphate + 3 H(+). Its pathway is cofactor biosynthesis; biotin biosynthesis; biotin from 7,8-diaminononanoate: step 1/2. Catalyzes a mechanistically unusual reaction, the ATP-dependent insertion of CO2 between the N7 and N8 nitrogen atoms of 7,8-diaminopelargonic acid (DAPA, also called 7,8-diammoniononanoate) to form a ureido ring. This is ATP-dependent dethiobiotin synthetase BioD from Xylella fastidiosa (strain 9a5c).